Consider the following 422-residue polypeptide: Glutamyl-tRNA reductase (422 aa).

Substrate contacts are provided by residues 49–52 (TCNR), Ser110, 115–117 (EPQ), and Gln121. Cys50 functions as the Nucleophile in the catalytic mechanism. 190-195 (GAGETI) serves as a coordination point for NADP(+).

Belongs to the glutamyl-tRNA reductase family. Homodimer.

It catalyses the reaction (S)-4-amino-5-oxopentanoate + tRNA(Glu) + NADP(+) = L-glutamyl-tRNA(Glu) + NADPH + H(+). The protein operates within porphyrin-containing compound metabolism; protoporphyrin-IX biosynthesis; 5-aminolevulinate from L-glutamyl-tRNA(Glu): step 1/2. In terms of biological role, catalyzes the NADPH-dependent reduction of glutamyl-tRNA(Glu) to glutamate 1-semialdehyde (GSA). The sequence is that of Glutamyl-tRNA reductase from Colwellia psychrerythraea (strain 34H / ATCC BAA-681) (Vibrio psychroerythus).